The primary structure comprises 127 residues: ATP synthase epsilon chain (127 aa).

It belongs to the ATPase epsilon chain family. F-type ATPases have 2 components, CF(1) - the catalytic core - and CF(0) - the membrane proton channel. CF(1) has five subunits: alpha(3), beta(3), gamma(1), delta(1), epsilon(1). CF(0) has three main subunits: a, b and c.

It localises to the cell inner membrane. Produces ATP from ADP in the presence of a proton gradient across the membrane. The protein is ATP synthase epsilon chain of Leptospira borgpetersenii serovar Hardjo-bovis (strain JB197).